Consider the following 234-residue polypeptide: Endonuclease V (234 aa).

D36 and D104 together coordinate Mg(2+).

This sequence belongs to the endonuclease V family. Requires Mg(2+) as cofactor.

The protein resides in the cytoplasm. The enzyme catalyses Endonucleolytic cleavage at apurinic or apyrimidinic sites to products with a 5'-phosphate.. DNA repair enzyme involved in the repair of deaminated bases. Selectively cleaves double-stranded DNA at the second phosphodiester bond 3' to a deoxyinosine leaving behind the intact lesion on the nicked DNA. The protein is Endonuclease V of Yersinia pestis.